The sequence spans 434 residues: Prenyltransferase penG (434 aa).

Composition is skewed to polar residues over residues 1 to 14 (MTQDVVTVSSQTAG) and 21 to 35 (THSNPDNKTTSPSTW). The tract at residues 1-35 (MTQDVVTVSSQTAGTIKESGTHSNPDNKTTSPSTW) is disordered. L-tryptophan is bound by residues 104-105 (EI) and glutamate 108. Residues arginine 122, lysine 208, arginine 275, lysine 277, tyrosine 279, and tyrosine 348 each coordinate substrate.

The protein belongs to the tryptophan dimethylallyltransferase family.

It carries out the reaction yaequinolone E + dimethylallyl diphosphate + H2O = [(1'E)-3'-hydroxy-3',7'-dimethylocta-1',6'-dien-1'-yl]-quinolinone B + diphosphate. It participates in secondary metabolite biosynthesis. The protein operates within alkaloid biosynthesis. Its pathway is mycotoxin biosynthesis. In terms of biological role, prenyltransferase; part of the gene cluster that mediates the biosynthesis of penigequinolones, potent insecticidal alkaloids that contain a highly modified 10-carbon prenyl group. The first stage is catalyzed by the nonribosomal peptide synthetase penN that condenses anthranilic acid and O-methyl-L-tyrosine to produce 4'-methoxycyclopeptin. 4'-methoxycyclopeptin is then converted to 4'-methoxydehydrocyclopeptin by the ketoglutarate-dependent dioxygenase penM through dehydrogenation to form a double bond between C-alpha and C-beta of the O-methyltyrosine side chain. PenM also converts its first product methoxydehydrocyclopeptin to 4'-methoxycyclopenin. The following conversion of 4'methoxycyclopenin into 4'-methoxyviridicatin is catalyzed by the cyclopenase penL. 4'-methoxyviridicatin is the precursor of quinolone natural products, and is further converted to quinolinone B. The prenyltransferase penI then catalyzes the canonical Friedel-Crafts alkylation of quinolinone B with dimethylallyl cation to yield dimethylallyl quinolone, which is subjected to FAD-dependent dehydrogenation by the FAD-linked oxidoreductase penH to yield conjugated aryl diene. The delta(3') double bond then serves as the site of the second alkylation with DMAPP catalyzed by the prenyltransferase penG to yield a carbenium ion intermediate, which can be attacked by H(2)O to yield a styrenyl quinolone containing a C3'-hydroxyprenyl chain, or undergo cyclization to yield yaequinolones J1 and J2. The conversion of the styrenyl quinolone into the tetrahydrofuran-containing yaequinolone C is performed by the FAD-dependent monooxygenase penE and involves epoxidation of the terminal C7'-C8' olefin, followed by epoxide ring opening initiated by the C3' hydroxyl group. The predicted cysteine hydrolase penJ acts as an epoxide hydrolase that enhances the rate of the 5-exo-tet cyclization step, increasing the yield of yaequinolone C. PenF catalyzes the cationic rearrangement of the epoxide formed by penE (before ring opening to produce yaequinolone C) into yaequinolone D. Finally, the short-chain dehydrogenase/reductase (SDR)-like reductase penD, catalyzes both the dehydration of yaequinolone D and the reduction of the resulting oxonium to yield penigequinolone. The sequence is that of Prenyltransferase penG from Penicillium thymicola.